The following is a 280-amino-acid chain: Purine nucleoside phosphorylase (280 aa).

Residues Ser15 and Arg55 to His56 each bind phosphate. Met194 is a substrate binding site. Position 195 (Thr195) interacts with phosphate. A substrate-binding site is contributed by Asp218 to Asp220.

The protein belongs to the PNP/MTAP phosphorylase family. MTAP subfamily. As to quaternary structure, homohexamer. Dimer of a homotrimer.

The catalysed reaction is a purine D-ribonucleoside + phosphate = a purine nucleobase + alpha-D-ribose 1-phosphate. Its pathway is purine metabolism; purine nucleoside salvage. Its function is as follows. Purine nucleoside phosphorylase involved in purine salvage. This Streptomyces coelicolor (strain ATCC BAA-471 / A3(2) / M145) protein is Purine nucleoside phosphorylase.